The chain runs to 378 residues: D-alanine--D-alanine ligase (378 aa).

The ATP-grasp domain maps to 149 to 374; the sequence is KVLLRAAGIP…FRTVVTDLIE (226 aa). ATP is bound at residue 189 to 247; the sequence is EAGLQYPLFVKPSRAGSSFGVTKVEQIGDAAALAAAVFEASRHDWRVLVEQGIDAREIE. Mg(2+)-binding residues include Asp328, Glu341, and Asn343.

The protein belongs to the D-alanine--D-alanine ligase family. Mg(2+) serves as cofactor. The cofactor is Mn(2+).

The protein localises to the cytoplasm. It catalyses the reaction 2 D-alanine + ATP = D-alanyl-D-alanine + ADP + phosphate + H(+). The protein operates within cell wall biogenesis; peptidoglycan biosynthesis. Its function is as follows. Cell wall formation. This is D-alanine--D-alanine ligase from Bifidobacterium animalis subsp. lactis (strain AD011).